Reading from the N-terminus, the 107-residue chain is YcgL domain-containing protein Pcryo_0807 (107 aa).

The YcgL domain occupies 1-95; it reads MHCDIYKFLK…QDVMRRQAEL (95 aa).

The sequence is that of YcgL domain-containing protein Pcryo_0807 from Psychrobacter cryohalolentis (strain ATCC BAA-1226 / DSM 17306 / VKM B-2378 / K5).